Reading from the N-terminus, the 488-residue chain is Cysteine desulfurase, mitochondrial (488 aa).

The interval leucine 25–histidine 52 is disordered. Over residues alanine 30–lysine 47 the composition is skewed to polar residues. Pyridoxal 5'-phosphate contacts are provided by residues alanine 157–threonine 158, asparagine 237, glutamine 265, and serine 285–histidine 287. N6-(pyridoxal phosphate)lysine is present on lysine 288. Threonine 325 serves as a coordination point for pyridoxal 5'-phosphate. Catalysis depends on cysteine 412, which acts as the Cysteine persulfide intermediate. A [2Fe-2S] cluster-binding site is contributed by cysteine 412.

This sequence belongs to the class-V pyridoxal-phosphate-dependent aminotransferase family. NifS/IscS subfamily. It depends on pyridoxal 5'-phosphate as a cofactor.

The protein resides in the mitochondrion. The catalysed reaction is (sulfur carrier)-H + L-cysteine = (sulfur carrier)-SH + L-alanine. Catalyzes the removal of elemental sulfur from cysteine to produce alanine. It supplies the inorganic sulfur for iron-sulfur (Fe-S) clusters. Plays a role in both tRNA-processing and mitochondrial metabolism. Involved in the 2-thio-modification of both 5-carboxymethylaminomethyl-2-thiouridine in mitochondrial tRNAs and 5-methoxycarbonylmethyl-2-thiouridine (mcm5s2U) in cytoplasmic tRNAs. The protein is Cysteine desulfurase, mitochondrial (NFS1) of Candida albicans (strain SC5314 / ATCC MYA-2876) (Yeast).